A 217-amino-acid chain; its full sequence is Kunitz-type trypsin inhibitor-like 1 protein (217 aa).

Residues 1–26 (MKPLSPLTLSFFLFVFITNLSLAFSN) form the signal peptide. 2 disulfides stabilise this stretch: Cys-70–Cys-115 and Cys-168–Cys-175. An N-linked (GlcNAc...) asparagine glycan is attached at Asn-191.

Belongs to the protease inhibitor I3 (leguminous Kunitz-type inhibitor) family. As to expression, expressed in roots, leaves, epidermal layers of elongating stems, meristems and in the vascular system.

The protein resides in the secreted. Its function is as follows. Might act as a protease inhibitor involved in plant defense responses. In Pisum sativum (Garden pea), this protein is Kunitz-type trypsin inhibitor-like 1 protein (PIP20-1).